Consider the following 321-residue polypeptide: Mitochondrial coenzyme A transporter SLC25A42 (321 aa).

3 Solcar repeats span residues 33–119 (RSVL…YKGI), 131–216 (LPPV…LKKT), and 226–314 (PFPY…TQIL). The next 6 helical transmembrane spans lie at 35–55 (VLNSLVSGAFAGAVAKTAVAP), 91–111 (LWRGNSATMVRVIPYAAIQFC), 137–154 (LLAGSLAGTTAAIITYPL), 191–208 (GFTPTILGVVPYAGLSFF), 232–252 (LVFGACAGLIGQSASYPLDVV), and 295–315 (VKGPIAVGISFMTFDLTQILL).

It belongs to the mitochondrial carrier (TC 2.A.29) family.

The protein resides in the mitochondrion inner membrane. The enzyme catalyses ADP(out) + CoA(in) = ADP(in) + CoA(out). It carries out the reaction 3'-dephospho-CoA(in) + ADP(out) = 3'-dephospho-CoA(out) + ADP(in). It catalyses the reaction adenosine 3',5'-bisphosphate(in) + ADP(out) = adenosine 3',5'-bisphosphate(out) + ADP(in). The catalysed reaction is AMP(in) + ADP(out) = AMP(out) + ADP(in). The enzyme catalyses dADP(in) + ADP(out) = dADP(out) + ADP(in). It carries out the reaction ADP(in) + ATP(out) = ADP(out) + ATP(in). In terms of biological role, mitochondrial carrier mediating the transport of coenzyme A (CoA) in mitochondria in exchange for intramitochondrial (deoxy)adenine nucleotides and adenosine 3',5'-diphosphate. The protein is Mitochondrial coenzyme A transporter SLC25A42 (slc25a42) of Danio rerio (Zebrafish).